A 91-amino-acid chain; its full sequence is RING finger protein Z (91 aa).

Gly2 carries N-myristoyl glycine; by host lipidation. Residues 35–71 form an RING-type; atypical zinc finger; that stretch reads CKCCWFQDKNLVECSDHYLCLKCISSMLKRGKNCEIC. A PTAP/PSAP motif motif is present at residues 85–88; sequence PTAP.

The protein belongs to the arenaviridae Z protein family. In terms of assembly, interacts with protein NP; this interaction probably directs the encapsidated genome to budding sites. Interacts (via RING domain) with polymerase L; this interaction inhibits viral transcription and replication, Z partially blocks the product exit tunnel for the releasing nascent RNA product. Interacts with the glycoprotein complex; this interaction plays a role in virion budding. Interacts with host eIF4E; this interaction results in eIF4E reduced affinity for its substrate, the 5'-m7 G cap structure. Interacts (via late-budding domain) with host TSG101; this interaction is essential for budding and release of viral particles. Interacts with host RPLP0; this interaction may serve to load ribosome-like particles inside the virion. Interacts with host PML; this interaction induces PML bodies redistribution in the cytoplasm upon viral infection. In terms of processing, myristoylation is required for the role of RING finger protein Z in assembly and budding.

The protein resides in the virion. The protein localises to the host cytoplasm. Its subcellular location is the host perinuclear region. It is found in the host cell membrane. In terms of biological role, plays a crucial role in virion assembly and budding. Expressed late in the virus life cycle, it acts as an inhibitor of viral transcription and RNA synthesis by interacting with the viral polymerase L. Presumably recruits the NP encapsidated genome to cellular membranes at budding sites via direct interaction with NP. Plays critical roles in the final steps of viral release by interacting with host TSG101, a member of the vacuolar protein-sorting pathway and using other cellular host proteins involved in vesicle formation pathway. The budding of the virus progeny occurs after association of protein Z with the viral glycoprotein complex SSP-GP1-GP2 at the cell periphery, step that requires myristoylation of protein Z. Also selectively represses protein production by associating with host eIF4E. In cell-based minigenome assay, has an inhibitory effect on the ribonucleoprotein machinery (vRNP), which is responsible for the replication and transcription of the viral genome. This is RING finger protein Z from Latino mammarenavirus (isolate Rat/Bolivia/MARU 1924/1965) (LATV).